A 374-amino-acid chain; its full sequence is Chaperone protein DnaJ (374 aa).

Positions 5–70 (DYYEVLGVER…SKRAAFDQYG (66 aa)) constitute a J domain. The segment at 133 to 211 (GTTVSIRVPT…CHGEGRVEEY (79 aa)) adopts a CR-type zinc-finger fold. Zn(2+)-binding residues include Cys146, Cys149, Cys163, Cys166, Cys185, Cys188, Cys199, and Cys202. CXXCXGXG motif repeat units lie at residues 146-153 (CQPCDGSG), 163-170 (CPTCGGIG), 185-192 (CPRCHGQG), and 199-206 (CTSCHGEG).

This sequence belongs to the DnaJ family. As to quaternary structure, homodimer. The cofactor is Zn(2+).

It localises to the cytoplasm. Functionally, participates actively in the response to hyperosmotic and heat shock by preventing the aggregation of stress-denatured proteins and by disaggregating proteins, also in an autonomous, DnaK-independent fashion. Unfolded proteins bind initially to DnaJ; upon interaction with the DnaJ-bound protein, DnaK hydrolyzes its bound ATP, resulting in the formation of a stable complex. GrpE releases ADP from DnaK; ATP binding to DnaK triggers the release of the substrate protein, thus completing the reaction cycle. Several rounds of ATP-dependent interactions between DnaJ, DnaK and GrpE are required for fully efficient folding. Also involved, together with DnaK and GrpE, in the DNA replication of plasmids through activation of initiation proteins. The protein is Chaperone protein DnaJ of Pseudomonas putida (strain ATCC 700007 / DSM 6899 / JCM 31910 / BCRC 17059 / LMG 24140 / F1).